Here is a 96-residue protein sequence, read N- to C-terminus: Histone-like protein p6 (96 aa).

The DNA-binding element occupies 1–19; it reads MAKMMQREITKTTVNVAKM.

This sequence belongs to the phi29likevirus histone-like protein p6 family. Homodimer. Homomultimer. Binds to double-stranded DNA giving rise to multimeric nucleoprotein complexes. Binding specificity for the viral DNA is based on supercoiling, the viral genome having a negative superhelicity lower than that of plasmid DNA. Interacts with the DNA replication protein p17; this interaction optimizes the binding of protein p6 at the viral DNA ends, thus favoring the initiation of replication.

In terms of biological role, histone-like nucleoprotein that binds to the viral dsDNA and responsible for wrapping and compacting the viral DNA about 4-fold. Forms a nucleoprotein complex in which the DNA adopts a right-handed toroidal conformation winding around a protein core. Binds ito most, if not all, the viral genome, although with different affinity, the highest one corresponding to the genome ends. The formation of the nucleoprotein complex at the genome ends, activates the initiation of viral DNA replication. The binding of p6 would recruit the complex formed by the TP and the DNA polymerase to the origin. Protein p6 also represses early transcription from promoter C2, and, together with protein p4, represses transcription from promoters A2b and A2c and activates late transcription from promoter A3. Protein p6 is therefore involved in the early to late transcription switch. The formation of the nucleoprotein complex at the right end of the phage genome where the early promoter C2 is located affects local topology, which may contribute to the promoter repression. The sequence is that of Histone-like protein p6 (6) from Bacillus phage PZA (Bacteriophage PZA).